Consider the following 332-residue polypeptide: Ethylene-responsive transcription factor ERF119 (332 aa).

The tract at residues 1-33 is disordered; it reads MAERKKRSSIQTNKPNKKPMKKKPFQLNHLPGL. Residues 15 to 24 are compositionally biased toward basic residues; sequence PNKKPMKKKP. The segment at residues 130–187 is a DNA-binding region (AP2/ERF); that stretch reads KPVGVRQRKWGKWAAEIRHPITKVRTWLGTYETLEQAADAYATKKLEFDALAAATSAA.

Belongs to the AP2/ERF transcription factor family. ERF subfamily.

It is found in the nucleus. In terms of biological role, probably acts as a transcriptional activator. Binds to the GCC-box pathogenesis-related promoter element. May be involved in the regulation of gene expression by stress factors and by components of stress signal transduction pathways. The protein is Ethylene-responsive transcription factor ERF119 (ERF119) of Arabidopsis thaliana (Mouse-ear cress).